The primary structure comprises 184 residues: NADH-quinone oxidoreductase subunit B (184 aa).

The [4Fe-4S] cluster site is built by Cys37, Cys38, Cys103, and Cys132.

This sequence belongs to the complex I 20 kDa subunit family. As to quaternary structure, NDH-1 is composed of 14 different subunits. Subunits NuoB, C, D, E, F, and G constitute the peripheral sector of the complex. [4Fe-4S] cluster serves as cofactor.

The protein resides in the cell membrane. The catalysed reaction is a quinone + NADH + 5 H(+)(in) = a quinol + NAD(+) + 4 H(+)(out). NDH-1 shuttles electrons from NADH, via FMN and iron-sulfur (Fe-S) centers, to quinones in the respiratory chain. The immediate electron acceptor for the enzyme in this species is believed to be a menaquinone. Couples the redox reaction to proton translocation (for every two electrons transferred, four hydrogen ions are translocated across the cytoplasmic membrane), and thus conserves the redox energy in a proton gradient. This is NADH-quinone oxidoreductase subunit B from Rhodococcus opacus (strain B4).